The following is a 511-amino-acid chain: Probable dolichyl pyrophosphate Glc1Man9GlcNAc2 alpha-1,3-glucosyltransferase (511 aa).

The next 11 helical transmembrane spans lie at 4–24, 94–112, 124–144, 151–171, 210–230, 300–320, 332–352, 356–370, 377–394, 432–452, and 469–491; these read LFWH…PAYH, VYFQ…VLGV, DTQQ…LIFV, YNGL…RQRF, VVSA…PFAV, PAIT…PILV, LVFL…GWHV, AILM…LTLV, YAYV…PLLF, WLYM…SFLL, and YSAL…ISWG.

It belongs to the ALG6/ALG8 glucosyltransferase family.

It localises to the endoplasmic reticulum membrane. The enzyme catalyses an alpha-D-Glc-(1-&gt;3)-alpha-D-Man-(1-&gt;2)-alpha-D-Man-(1-&gt;2)-alpha-D-Man-(1-&gt;3)-[alpha-D-Man-(1-&gt;2)-alpha-D-Man-(1-&gt;3)-[alpha-D-Man-(1-&gt;2)-alpha-D-Man-(1-&gt;6)]-alpha-D-Man-(1-&gt;6)]-beta-D-Man-(1-&gt;4)-beta-D-GlcNAc-(1-&gt;4)-alpha-D-GlcNAc-diphospho-di-trans,poly-cis-dolichol + a di-trans,poly-cis-dolichyl beta-D-glucosyl phosphate = an alpha-D-Glc-(1-&gt;3)-alpha-D-Glc-(1-&gt;3)-alpha-D-Man-(1-&gt;2)-alpha-D-Man-(1-&gt;2)-alpha-D-Man-(1-&gt;3)-[alpha-D-Man-(1-&gt;2)-alpha-D-Man-(1-&gt;3)-[alpha-D-Man-(1-&gt;2)-alpha-D-Man-(1-&gt;6)]-alpha-D-Man-(1-&gt;6)]-beta-D-Man-(1-&gt;4)-beta-D-GlcNAc-(1-&gt;4)-alpha-D-GlcNAc-diphospho-di-trans,poly-cis-dolichol + a di-trans,poly-cis-dolichyl phosphate + H(+). Its pathway is protein modification; protein glycosylation. Its function is as follows. Adds the second glucose residue to the lipid-linked oligosaccharide precursor for N-linked glycosylation. Transfers glucose from dolichyl phosphate glucose (Dol-P-Glc) onto the lipid-linked oligosaccharide Glc(1)Man(9)GlcNAc(2)-PP-Dol. Functions in developmental processes such as germband extension, the apical constriction of mesoderm precursor cells and ventral furrow formation in early embryogenesis prior to gastrulation. Involved in the glycosylation and intracellular distribution of shg (E-cadherin). Function in cell intercalation in the lateral epidermis during germband extension may be due to its effect on shg. This chain is Probable dolichyl pyrophosphate Glc1Man9GlcNAc2 alpha-1,3-glucosyltransferase, found in Drosophila melanogaster (Fruit fly).